Consider the following 20-residue polypeptide: Beta-fibrinogenase jerdofibrase (20 aa).

The region spanning 1-20 (VIGGDECNINEHPFLVLVYY) is the Peptidase S1 domain.

Belongs to the peptidase S1 family. Snake venom subfamily. As to quaternary structure, monomer. As to expression, expressed by the venom gland.

It localises to the secreted. Its activity is regulated as follows. Inhibited by PMSF and soybean trypsin inhibitor. Partially inhibited by DTT and cysteine. Not affected by EDTA. In terms of biological role, fibrin(ogen)olytic serine protease degrades Bbeta-chain of human fibrinogen (FGB) and shows a lower activity on Aa-chain (FGA). Also degrades fibrin directly. Releases fibrinopeptide B and a small amount of fibrinopeptide A. Has also be shown to catalyze the hydrolysis of some chromogenic substrates such as S2238, S2160, S2302 and S2251. The polypeptide is Beta-fibrinogenase jerdofibrase (Protobothrops jerdonii (Jerdon's pitviper)).